The following is a 799-amino-acid chain: Heat shock protein 90-6, mitochondrial (799 aa).

A mitochondrion-targeting transit peptide spans 1-48; sequence MIRLSKRSVSTLLRSGNQSFRIAAAASTSRSSPSATDVKRSDTESRWY. Residues 23-35 are compositionally biased toward low complexity; that stretch reads AAAASTSRSSPSA. A disordered region spans residues 23–61; it reads AAAASTSRSSPSATDVKRSDTESRWYSSLTNGQSKNSGS. Positions 46–61 are enriched in polar residues; that stretch reads RWYSSLTNGQSKNSGS. ATP-binding positions include E124, N128, D170, M175, 190–191, 214–219, and T269; these read SG and QFGVGF. The tract at residues 314–337 is disordered; the sequence is EVEVEDDPTETKKDDQDDQTEKKK. Residues 322-334 show a composition bias toward basic and acidic residues; that stretch reads TETKKDDQDDQTE. R464 contributes to the ATP binding site. Positions 766-777 are enriched in polar residues; sequence SPEVQPQQQQMA. A disordered region spans residues 766–799; it reads SPEVQPQQQQMAHSHDAETFEAEVVEPVEVDGKK. Residues 784-799 are compositionally biased toward acidic residues; sequence TFEAEVVEPVEVDGKK.

It belongs to the heat shock protein 90 family. As to quaternary structure, interacts with P23-1.

It localises to the mitochondrion. Functionally, molecular chaperone which stabilizes unfolding protein intermediates and functions as a folding molecular chaperone that assists the non-covalent folding of proteins in an ATP-dependent manner. This chain is Heat shock protein 90-6, mitochondrial, found in Arabidopsis thaliana (Mouse-ear cress).